The following is a 391-amino-acid chain: E3 ubiquitin-protein ligase RMND5A (391 aa).

Residues 114–146 (SQQILSEVMVEHFFRQGMLDVAEELCQEAGLSI) form the LisH domain. Positions 153–210 (PFVELNRILEALKVRVLRPALEWAVSNREMLMAQNSSLEFKLHRLYFISLLMGGTVNQ) constitute a CTLH domain. Residues 336–377 (CPILRQQTTDNNPPMKLVCGHIISRDALNKMFNGSKLKCPYC) form an RING-Gid-type zinc finger.

In terms of assembly, identified in the CTLH complex that contains at least RANBP9, MKLN1, MAEA, RMND5A, GID8 and ARMC8.

Its subcellular location is the nucleus. The protein localises to the nucleoplasm. It is found in the cytoplasm. The enzyme catalyses S-ubiquitinyl-[E2 ubiquitin-conjugating enzyme]-L-cysteine + [acceptor protein]-L-lysine = [E2 ubiquitin-conjugating enzyme]-L-cysteine + N(6)-ubiquitinyl-[acceptor protein]-L-lysine.. Its function is as follows. E3 ubiquitin-protein ligase component of the CTLH complex. The sequence is that of E3 ubiquitin-protein ligase RMND5A (rmnd5a) from Xenopus tropicalis (Western clawed frog).